Reading from the N-terminus, the 226-residue chain is Thymidylate kinase (226 aa).

Position 20 to 27 (20 to 27 (GGEGAGKS)) interacts with ATP.

This sequence belongs to the thymidylate kinase family.

It catalyses the reaction dTMP + ATP = dTDP + ADP. Functionally, phosphorylation of dTMP to form dTDP in both de novo and salvage pathways of dTTP synthesis. In Bradyrhizobium sp. (strain BTAi1 / ATCC BAA-1182), this protein is Thymidylate kinase.